Consider the following 698-residue polypeptide: Dual trans-enoyl reductase/FAD-dependent monooxygenase tazHJ (698 aa).

Residues 54–57, 78–81, tyrosine 96, and 279–280 each bind NADP(+); these read STAT, SPRH, and IA. The FAD site is built by glutamate 299, glycine 312, and arginine 372. The active site involves arginine 455. 2 residues coordinate FAD: aspartate 571 and alanine 584.

It in the N-terminal section; belongs to the zinc-containing alcohol dehydrogenase family. The protein in the C-terminal section; belongs to the paxM FAD-dependent monooxygenase family.

The protein operates within secondary metabolite biosynthesis. Dual trans-enoyl reductase/FAD-dependent monooxygenase; part of the gene cluster that mediates the biosynthesis of azaterrilone A and other azaphilones, a class of fungal metabolites characterized by a highly oxygenated pyrano-quinone bicyclic core and exhibiting a broad range of bioactivities. The first step of the pathway begins with the non-reducing polyketide synthase tazA that assembles one acetyl-CoA starter unit, five malonyl-CoA units, and catalyzes a series of Claisen condensations, methylation, PT-mediated cyclization, and finally releases the first hexaketide precursor through the R-domain. The tazA product then undergoes reduction on its terminal ketone and the following pyran-ring formation by yet undetermined enzyme(s). Dehydration and enoyl reduction, possibly involving the trans-enoyl reductase tazE leads to the next intermediate. TazD is predicted as an acetyltransferase and might catalyze the acetylation steps leading to the synthesis of azaterrilone A. Azaterrilone A is not the final product of the taz pathway and both the highly reducing polyketide synthase tazB and the dual enzyme tazHJ catalyze late steps of the pathway, leading to the production of the 2 final stereoisomers that contain additional polyketide modification whose structures have still to be determined. This is Dual trans-enoyl reductase/FAD-dependent monooxygenase tazHJ from Aspergillus terreus (strain NIH 2624 / FGSC A1156).